Here is a 239-residue protein sequence, read N- to C-terminus: MNIEQFQSMLEEKGITLSSRQLEQFKIYFETLVEWNEKMNLTAITEKEEVYLKHFFDSITAAFYYDFSKPFSICDVGAGAGFPSIPLKICFPHLKVTIVDSLQKRINFLNHLAQKLELSDVAFCHDRAETFGKKEGVRESYDIVMARAVARLSVLSELCLPLVKVGGTFIAMKGAAANEEIENGKYALEVLGGELKEMSTFQLPFEESERNILLIEKKRKTPKKYPRKPGTPNKLPIEK.

Residues Gly77, Phe82, 128–129 (AE), and Arg147 contribute to the S-adenosyl-L-methionine site.

It belongs to the methyltransferase superfamily. RNA methyltransferase RsmG family.

It localises to the cytoplasm. Functionally, specifically methylates the N7 position of guanine in position 535 of 16S rRNA. The polypeptide is Ribosomal RNA small subunit methyltransferase G (Bacillus cereus (strain G9842)).